The following is a 352-amino-acid chain: NAD(P)H oxidoreductase RTN4IP1, mitochondrial (352 aa).

Residues glutamate 11 to isoleucine 348 form the Enoyl reductase (ER) domain. NADPH contacts are provided by valine 165, tyrosine 206, alanine 296, and phenylalanine 298.

Belongs to the zinc-containing alcohol dehydrogenase family. Quinone oxidoreductase subfamily.

Its subcellular location is the mitochondrion matrix. The enzyme catalyses a quinone + NADH + H(+) = a quinol + NAD(+). It carries out the reaction a quinone + NADPH + H(+) = a quinol + NADP(+). It participates in cofactor biosynthesis; ubiquinone biosynthesis. In terms of biological role, NAD(P)H oxidoreductase involved in the ubiquinone biosynthetic pathway. Required for the O-methyltransferase activity of coq3. The protein is NAD(P)H oxidoreductase RTN4IP1, mitochondrial (rtn4ip1) of Dictyostelium discoideum (Social amoeba).